Here is a 280-residue protein sequence, read N- to C-terminus: Phosphatidylserine decarboxylase proenzyme (280 aa).

Catalysis depends on charge relay system; for autoendoproteolytic cleavage activity residues aspartate 88, histidine 144, and serine 247. The active-site Schiff-base intermediate with substrate; via pyruvic acid; for decarboxylase activity is serine 247. Residue serine 247 is modified to Pyruvic acid (Ser); by autocatalysis.

It belongs to the phosphatidylserine decarboxylase family. PSD-B subfamily. Prokaryotic type I sub-subfamily. As to quaternary structure, heterodimer of a large membrane-associated beta subunit and a small pyruvoyl-containing alpha subunit. Pyruvate serves as cofactor. Post-translationally, is synthesized initially as an inactive proenzyme. Formation of the active enzyme involves a self-maturation process in which the active site pyruvoyl group is generated from an internal serine residue via an autocatalytic post-translational modification. Two non-identical subunits are generated from the proenzyme in this reaction, and the pyruvate is formed at the N-terminus of the alpha chain, which is derived from the carboxyl end of the proenzyme. The autoendoproteolytic cleavage occurs by a canonical serine protease mechanism, in which the side chain hydroxyl group of the serine supplies its oxygen atom to form the C-terminus of the beta chain, while the remainder of the serine residue undergoes an oxidative deamination to produce ammonia and the pyruvoyl prosthetic group on the alpha chain. During this reaction, the Ser that is part of the protease active site of the proenzyme becomes the pyruvoyl prosthetic group, which constitutes an essential element of the active site of the mature decarboxylase.

It is found in the cell membrane. The catalysed reaction is a 1,2-diacyl-sn-glycero-3-phospho-L-serine + H(+) = a 1,2-diacyl-sn-glycero-3-phosphoethanolamine + CO2. It functions in the pathway phospholipid metabolism; phosphatidylethanolamine biosynthesis; phosphatidylethanolamine from CDP-diacylglycerol: step 2/2. Functionally, catalyzes the formation of phosphatidylethanolamine (PtdEtn) from phosphatidylserine (PtdSer). The sequence is that of Phosphatidylserine decarboxylase proenzyme from Xanthomonas axonopodis pv. citri (strain 306).